Consider the following 80-residue polypeptide: MVKLSFTLRFGDVWVAENEEIVAKGHSLDELDRNLELELRKAGYKGRVEIFMKFDYSTIPEWMRQFHPHYFNRTVVFDLD.

A signal peptide spans 1–15; it reads MVKLSFTLRFGDVWV.

This is an uncharacterized protein from Archaeoglobus fulgidus (strain ATCC 49558 / DSM 4304 / JCM 9628 / NBRC 100126 / VC-16).